Reading from the N-terminus, the 317-residue chain is MYKLIYSVLIAFFIAMLEGPILIPLLHKFKFGQSIREDGPKTHLKKAGTPTMGGIIFILATFITMAVIVKKPSDEAMIALYAFIGFGIIGAIDDTLKIVRRKNLGLRAYQKMILLLAISGIFAYYSANNPYIGTSIIIPFKRDTWDLGVFYIPFIIVYFAATTNAVNLTDGLDGLATSVTLLVMTFLALVSFAMGHITLAVFCAILAGALLGFLKYNAFPAQIFMGDTGSLALGGAIGAVAMILKLPLLVIIIGGIYVLEALSVIFQVLSFKLTGKRIFKMAPIHHHFELSGWHETRVVSVFCIVTVILCLVGFLSL.

9 consecutive transmembrane segments (helical) span residues 4-24 (LIYSVLIAFFIAMLEGPILIP), 49-69 (TPTMGGIIFILATFITMAVIV), 76-96 (AMIALYAFIGFGIIGAIDDTL), 112-132 (MILLLAISGIFAYYSANNPYI), 147-167 (LGVFYIPFIIVYFAATTNAVN), 186-206 (FLALVSFAMGHITLAVFCAIL), 223-243 (IFMGDTGSLALGGAIGAVAMI), 246-266 (LPLLVIIIGGIYVLEALSVIF), and 297-317 (RVVSVFCIVTVILCLVGFLSL).

Belongs to the glycosyltransferase 4 family. MraY subfamily. The cofactor is Mg(2+).

The protein resides in the cell membrane. It carries out the reaction UDP-N-acetyl-alpha-D-muramoyl-L-alanyl-gamma-D-glutamyl-meso-2,6-diaminopimeloyl-D-alanyl-D-alanine + di-trans,octa-cis-undecaprenyl phosphate = di-trans,octa-cis-undecaprenyl diphospho-N-acetyl-alpha-D-muramoyl-L-alanyl-D-glutamyl-meso-2,6-diaminopimeloyl-D-alanyl-D-alanine + UMP. It participates in cell wall biogenesis; peptidoglycan biosynthesis. Functionally, catalyzes the initial step of the lipid cycle reactions in the biosynthesis of the cell wall peptidoglycan: transfers peptidoglycan precursor phospho-MurNAc-pentapeptide from UDP-MurNAc-pentapeptide onto the lipid carrier undecaprenyl phosphate, yielding undecaprenyl-pyrophosphoryl-MurNAc-pentapeptide, known as lipid I. This is Phospho-N-acetylmuramoyl-pentapeptide-transferase from Clostridium kluyveri (strain NBRC 12016).